The chain runs to 457 residues: Probable xyloglucan 6-xylosyltransferase 3 (457 aa).

The segment at 1-40 is disordered; it reads MGKEDGFRTQKRVSTASSAAAGVLPTTMASGGVRRPPPRG. The Cytoplasmic portion of the chain corresponds to 1-51; the sequence is MGKEDGFRTQKRVSTASSAAAGVLPTTMASGGVRRPPPRGRQIQKTFNNVK. The helical; Signal-anchor for type II membrane protein transmembrane segment at 52–71 threads the bilayer; that stretch reads MTILCGFVTILVLRGTIGIN. At 72 to 457 the chain is on the lumenal side; that stretch reads FGTSDADVVN…TTPLKIEARS (386 aa). Asparagine 115 and asparagine 431 each carry an N-linked (GlcNAc...) asparagine glycan.

It belongs to the glycosyltransferase 34 family.

Its subcellular location is the golgi apparatus membrane. It catalyses the reaction Transfers an alpha-D-xylosyl residue from UDP-D-xylose to a glucose residue in xyloglucan, forming an alpha-(1-&gt;6)-D-xylosyl-D-glucose linkage.. Functionally, probable xyloglucan xylosyltransferase involved in the biosynthesis of xyloglucan. In Arabidopsis thaliana (Mouse-ear cress), this protein is Probable xyloglucan 6-xylosyltransferase 3.